The chain runs to 323 residues: HPr kinase/phosphorylase (323 aa).

Active-site residues include H146 and K167. An ATP-binding site is contributed by 161-168 (GESGLGKS). Mg(2+) is bound at residue S168. Residue D185 is the Proton acceptor; for phosphorylation activity. Proton donor; for dephosphorylation activity of the active site. Positions 209–218 (LEVRGLGLLD) are important for the catalytic mechanism of both phosphorylation and dephosphorylation. Residue E210 participates in Mg(2+) binding. The active site involves R250. The important for the catalytic mechanism of dephosphorylation stretch occupies residues 271-276 (QVAAGR).

The protein belongs to the HPrK/P family. Homohexamer. It depends on Mg(2+) as a cofactor.

It carries out the reaction [HPr protein]-L-serine + ATP = [HPr protein]-O-phospho-L-serine + ADP + H(+). It catalyses the reaction [HPr protein]-O-phospho-L-serine + phosphate + H(+) = [HPr protein]-L-serine + diphosphate. In terms of biological role, catalyzes the ATP- as well as the pyrophosphate-dependent phosphorylation of a specific serine residue in HPr, a phosphocarrier protein of the phosphoenolpyruvate-dependent sugar phosphotransferase system (PTS). HprK/P also catalyzes the pyrophosphate-producing, inorganic phosphate-dependent dephosphorylation (phosphorolysis) of seryl-phosphorylated HPr (P-Ser-HPr). The sequence is that of HPr kinase/phosphorylase from Cupriavidus metallidurans (strain ATCC 43123 / DSM 2839 / NBRC 102507 / CH34) (Ralstonia metallidurans).